The chain runs to 427 residues: Trigger factor (427 aa).

One can recognise a PPIase FKBP-type domain in the interval 163-248; sequence GDTVVIDFVG…IHEVKTKEVP (86 aa).

The protein belongs to the FKBP-type PPIase family. Tig subfamily.

It is found in the cytoplasm. It carries out the reaction [protein]-peptidylproline (omega=180) = [protein]-peptidylproline (omega=0). In terms of biological role, involved in protein export. Acts as a chaperone by maintaining the newly synthesized protein in an open conformation. Functions as a peptidyl-prolyl cis-trans isomerase. The polypeptide is Trigger factor (Streptococcus agalactiae serotype V (strain ATCC BAA-611 / 2603 V/R)).